A 241-amino-acid polypeptide reads, in one-letter code: Probable xyloglucan-specific endo-beta-1,4-glucanase A (241 aa).

The N-terminal stretch at 1-18 is a signal peptide; sequence MKFNLALALSLTVATAEA.

It belongs to the glycosyl hydrolase 12 (cellulase H) family.

The protein resides in the secreted. It carries out the reaction xyloglucan + H2O = xyloglucan oligosaccharides.. Its function is as follows. Catalyzes endohydrolysis of 1,4-beta-D-glucosidic linkages in xyloglucan with retention of the beta-configuration of the glycosyl residues. Specific for xyloglucan and does not hydrolyze other cell wall components. The chain is Probable xyloglucan-specific endo-beta-1,4-glucanase A (xgeA) from Aspergillus clavatus (strain ATCC 1007 / CBS 513.65 / DSM 816 / NCTC 3887 / NRRL 1 / QM 1276 / 107).